Reading from the N-terminus, the 351-residue chain is MKKSLIALAVLAASGAAMAQSSVTLFGIVDTNVAYVNKDAAGDSRYGLGTSGASTSRLGLRGTEDLGGGLKAGFWLEGEIFGDDGNASGFNFKRRSTVSLSGNFGEVRLGRDLVPTSQKLTSYDLFSATGIGPFMGFRNWAAGQGADDNGIRANNLISYYTPNFGGFNAGFGYAFDEKQTIGTADSVGRYIGGYVAYDNGPLSASLGLAQQKTAVGGLATDRDEITLGASYNFGVAKLSGLLQQTKFKRDIGGDIKTNSYMLGASAPVGGVGEVKLQYALYDQKAIDSKAHQITLGYVHNLSKRTALYGNLAFLKNKDASTLGLQAKGVYAGGVQAGESQTGVQVGIRHAF.

A signal peptide spans 1–19 (MKKSLIALAVLAASGAAMA). Q20 is subject to Pyrrolidone carboxylic acid.

It to bacterial outer membrane proteins and porins. In terms of assembly, homotrimer.

Its subcellular location is the cell outer membrane. Functionally, forms anion selective channels. This Delftia acidovorans (Pseudomonas acidovorans) protein is Outer membrane porin protein 32 (omp32).